A 442-amino-acid polypeptide reads, in one-letter code: D-serine dehydratase 1 (442 aa).

Lys-118 carries the N6-(pyridoxal phosphate)lysine modification.

Belongs to the serine/threonine dehydratase family. DsdA subfamily. Monomer. Requires pyridoxal 5'-phosphate as cofactor.

It carries out the reaction D-serine = pyruvate + NH4(+). This chain is D-serine dehydratase 1, found in Escherichia coli O6:K15:H31 (strain 536 / UPEC).